The primary structure comprises 847 residues: Leucine--tRNA ligase (847 aa).

The 'HIGH' region signature appears at 39–49 (PYPSGALHMGH). A 'KMSKS' region motif is present at residues 613 to 617 (KMSKS). Residue lysine 616 coordinates ATP.

The protein belongs to the class-I aminoacyl-tRNA synthetase family.

The protein localises to the cytoplasm. The catalysed reaction is tRNA(Leu) + L-leucine + ATP = L-leucyl-tRNA(Leu) + AMP + diphosphate. The sequence is that of Leucine--tRNA ligase from Gloeobacter violaceus (strain ATCC 29082 / PCC 7421).